The chain runs to 538 residues: Putative cysteine ligase BshC (538 aa).

A coiled-coil region spans residues 460 to 484 (KINEQIELLERMLKRNVEKKHEVEL).

The protein belongs to the BshC family.

Functionally, involved in bacillithiol (BSH) biosynthesis. May catalyze the last step of the pathway, the addition of cysteine to glucosamine malate (GlcN-Mal) to generate BSH. This chain is Putative cysteine ligase BshC, found in Bacillus cereus (strain AH187).